Consider the following 253-residue polypeptide: ATP synthase subunit b 1 (253 aa).

Residues 2–22 form a helical membrane-spanning segment; it reads LIDWFTVIAELVNFLILVWLL.

The protein belongs to the ATPase B chain family. In terms of assembly, F-type ATPases have 2 components, F(1) - the catalytic core - and F(0) - the membrane proton channel. F(1) has five subunits: alpha(3), beta(3), gamma(1), delta(1), epsilon(1). F(0) has four main subunits: a(1), b(2) and c(10-14). The alpha and beta chains form an alternating ring which encloses part of the gamma chain. F(1) is attached to F(0) by a central stalk formed by the gamma and epsilon chains, while a peripheral stalk is formed by the delta and b chains.

It is found in the cell inner membrane. F(1)F(0) ATP synthase produces ATP from ADP in the presence of a proton or sodium gradient. F-type ATPases consist of two structural domains, F(1) containing the extramembraneous catalytic core and F(0) containing the membrane proton channel, linked together by a central stalk and a peripheral stalk. During catalysis, ATP synthesis in the catalytic domain of F(1) is coupled via a rotary mechanism of the central stalk subunits to proton translocation. Its function is as follows. Component of the F(0) channel, it forms part of the peripheral stalk, linking F(1) to F(0). The sequence is that of ATP synthase subunit b 1 from Prosthecochloris aestuarii (strain DSM 271 / SK 413).